The following is a 373-amino-acid chain: ORC1-type DNA replication protein 2 (373 aa).

Residues 63 to 67, Tyr-205, and Arg-217 each bind ATP; that span reads TGKTS.

The protein belongs to the CDC6/cdc18 family.

Involved in regulation of DNA replication. The polypeptide is ORC1-type DNA replication protein 2 (cdc6-2) (Methanosarcina mazei (strain ATCC BAA-159 / DSM 3647 / Goe1 / Go1 / JCM 11833 / OCM 88) (Methanosarcina frisia)).